Consider the following 155-residue polypeptide: Myosin light chain alkali (155 aa).

2 EF-hand domains span residues 7–41 and 80–115; these read REIENVEFVFEVMGSAGEGIDAVDLGDALRALNLN and GCYEDFIECLKLYDKEENGTMMLAELQHALLALGES.

In terms of assembly, myosin is a hexamer of 2 heavy chains and 4 light chains.

In Drosophila pseudoobscura pseudoobscura (Fruit fly), this protein is Myosin light chain alkali (Mlc1).